A 1292-amino-acid chain; its full sequence is Myosin-1 (1292 aa).

The Myosin motor domain occupies V35–D714. G128–T135 serves as a coordination point for ATP. S356 carries the phosphoserine modification. Residues S403–S485 form an actin-binding region. IQ domains lie at H718–S738 and A739–K764. The 191-residue stretch at K770 to G960 folds into the TH1 domain. Disordered regions lie at residues R956–T991, Y1017–K1180, and P1227–T1258. Polar residues predominate over residues M1062–S1081. Pro residues-rich tracts occupy residues A1087 to R1121 and A1142 to A1155. Residues P1157–A1219 enclose the SH3 domain. Positions A1240–T1258 are enriched in low complexity.

It belongs to the TRAFAC class myosin-kinesin ATPase superfamily. Myosin family. In terms of processing, phosphorylation of the TEDS site (Ser-356) is required for the polarization of the actin cytoskeleton. Phosphorylation probably activates the myosin-I ATPase activity.

The protein localises to the cytoplasm. Its subcellular location is the cytoskeleton. The protein resides in the actin patch. In terms of biological role, type-I myosin implicated in the organization of the actin cytoskeleton. Required for proper actin cytoskeleton polarization. At the cell cortex, assembles in patch-like structures together with proteins from the actin-polymerizing machinery and promotes actin assembly. Functions as actin nucleation-promoting factor (NPF) for the Arp2/3 complex. This is Myosin-1 (MYO1) from Eremothecium gossypii (strain ATCC 10895 / CBS 109.51 / FGSC 9923 / NRRL Y-1056) (Yeast).